A 339-amino-acid polypeptide reads, in one-letter code: Trace amine-associated receptor 1 (339 aa).

The Extracellular portion of the chain corresponds to 1–25; it reads MMPFCHNIINISCVKNNWSNDVRAS. 3 disulfide bridges follow: C5-C178, C13-C88, and C96-C182. N-linked (GlcNAc...) asparagine glycosylation is found at N10 and N17. Residues 26–46 form a helical membrane-spanning segment; sequence LYSLMVLIILTTLVGNLIVIV. At 47-59 the chain is on the cytoplasmic side; sequence SISHFKELHTPTN. The chain crosses the membrane as a helical span at residues 60-80; the sequence is WLIHSMATVDFLPGCLVMPYS. The Extracellular portion of the chain corresponds to 81 to 98; that stretch reads MVRSAEHCWYFGEVFCKI. Residues 99–119 traverse the membrane as a helical segment; sequence HTSTDIMLSSASIFHLSFISI. D103 is a binding site for 2-phenylethylamine. The Cytoplasmic segment spans residues 120-136; the sequence is DRYYAVCDPLRYKAKIN. The chain crosses the membrane as a helical span at residues 137-157; it reads ILVICVMIFISWSVPAVFAFG. Topologically, residues 158 to 188 are extracellular; the sequence is MIFLELNFKGAEEIYYKHVHCRGGCSVFFSK. A helical transmembrane segment spans residues 189–209; that stretch reads ISGVLTFMTSFYIPGSIMLCV. The Cytoplasmic segment spans residues 210–252; it reads YYRIYLIAKEQARLINDANQKLQIGLEMKNGISQSKERKAVKT. The chain crosses the membrane as a helical span at residues 253–273; sequence LGIVMGVFLICWCPFFICTVM. At 274-287 the chain is on the extracellular side; it reads DPFLHYIIPPTLND. A helical transmembrane segment spans residues 288 to 308; that stretch reads VLIWFGYLNSTFNPMVYAFFY. The Cytoplasmic segment spans residues 309-339; sequence PWFRKALKMMLFGKIFQKDSSRCKLFLELSS.

Belongs to the G-protein coupled receptor 1 family.

It is found in the endomembrane system. Its subcellular location is the endoplasmic reticulum membrane. The protein resides in the cell membrane. Functionally, intracellular G-protein coupled receptor for trace amines, which recognizes endogenous amine-containing metabolites such as beta-phenylethylamine (beta-PEA), 3-iodothyronamine (T1AM), isoamylamine (IAA), cadaverine (CAD), cyclohexylamine (CHA), p-tyramine (p-TYR), trimethylamine (TMA), octopamine and tryptamine. Also functions as a receptor for various drugs and psychoactive substances, such as amphetamine and methamphetamine. Unresponsive to classical biogenic amines, such as epinephrine and histamine and only partially activated by dopamine and serotonin. Expressed in both the central and peripheral nervous system: TAAR1 activation regulates the activity of several neurotransmitter signaling pathways by (1) decreasing the basal firing rates of the neurons involved and by (2) lowering the sensitivity of receptors to neurotransmitters. Ligand binding causes a conformation change that triggers signaling via guanine nucleotide-binding proteins (G proteins) and modulates the activity of downstream effectors. TAAR1 is coupled with different G(i)/G(o)-, G(s)- or G(q)/G(11) classes of G alpha proteins depending on the ligand. CAD-binding is coupled to G(i)/G(o) G alpha proteins and mediates inhibition of adenylate cyclase activity. T1AM- or beta-PEA-binding is coupled to G(s) G alpha proteins and mediates activation of adenylate cyclase activity. CHA- or IAA-binding is coupled to G(q)/G(11) G alpha proteins and activates phospholipase C-beta, releasing diacylglycerol (DAG) and inositol 1,4,5-trisphosphate (IP3) second messengers. TMA-binding is coupled with all three G(i)/G(o)-, G(s)- or G(q)/G(11) G alpha protein subtypes. The chain is Trace amine-associated receptor 1 (TAAR1) from Pan troglodytes (Chimpanzee).